We begin with the raw amino-acid sequence, 216 residues long: Phosphorylated carbohydrates phosphatase TM_1254 (216 aa).

The Nucleophile role is filled by Asp-7.

It belongs to the HAD-like hydrolase superfamily. It depends on Co(2+) as a cofactor. Requires Mg(2+) as cofactor. The cofactor is Mn(2+). Ni(2+) serves as cofactor.

In terms of biological role, displays high phosphatase activity toward erythrose 4-phosphate, fructose 6-phosphate, 2-deoxyglucose 6-phosphate, and mannose 6-phosphate. May have a role in the intracellular metabolism of many phosphorylated carbohydrates. This chain is Phosphorylated carbohydrates phosphatase TM_1254, found in Thermotoga maritima (strain ATCC 43589 / DSM 3109 / JCM 10099 / NBRC 100826 / MSB8).